We begin with the raw amino-acid sequence, 331 residues long: Cathepsin 7 (331 aa).

Residues 1–17 (MTVAVFLAILCLRAALA) form the signal peptide. The propeptide at 18 to 111 (APRPDYSLDA…GKHIQKRNVK (94 aa)) is activation peptide. A Nuclear localization signal motif is present at residues 33–50 (KRNNAKTYSPEEEKQRRA). N72 carries an N-linked (GlcNAc...) asparagine glycan. 3 cysteine pairs are disulfide-bonded: C133-C176, C167-C209, and C267-C320. C136 is a catalytic residue. Catalysis depends on residues H274 and N298.

The protein belongs to the peptidase C1 family.

Its subcellular location is the endosome. It localises to the lysosome. The protein localises to the cytoplasm. The protein resides in the perinuclear region. It is found in the golgi apparatus. Its subcellular location is the nucleus. It localises to the secreted. The protein localises to the extracellular space. Its function is as follows. Involved in trophoblast cell proliferation and differentiation probably by affecting mitotic cell cycle progression. Proteolytic activity and nuclear localization are essential for its role in cell cycle progression. The sequence is that of Cathepsin 7 (Cts7) from Rattus norvegicus (Rat).